A 273-amino-acid polypeptide reads, in one-letter code: Putative pyruvate, phosphate dikinase regulatory protein (273 aa).

Residue G151–T158 participates in ADP binding.

The protein belongs to the pyruvate, phosphate/water dikinase regulatory protein family. PDRP subfamily.

It carries out the reaction N(tele)-phospho-L-histidyl/L-threonyl-[pyruvate, phosphate dikinase] + ADP = N(tele)-phospho-L-histidyl/O-phospho-L-threonyl-[pyruvate, phosphate dikinase] + AMP + H(+). The enzyme catalyses N(tele)-phospho-L-histidyl/O-phospho-L-threonyl-[pyruvate, phosphate dikinase] + phosphate + H(+) = N(tele)-phospho-L-histidyl/L-threonyl-[pyruvate, phosphate dikinase] + diphosphate. Functionally, bifunctional serine/threonine kinase and phosphorylase involved in the regulation of the pyruvate, phosphate dikinase (PPDK) by catalyzing its phosphorylation/dephosphorylation. The sequence is that of Putative pyruvate, phosphate dikinase regulatory protein from Desulfitobacterium hafniense (strain DSM 10664 / DCB-2).